Reading from the N-terminus, the 409-residue chain is uncharacterized protein (409 aa).

Disordered regions lie at residues 12–32, 133–160, and 194–213; these read ENTE…LHCP, EVST…SREQ, and TVSS…GLST. Residues 134-160 are compositionally biased toward polar residues; the sequence is VSTQKSWSSEKNWSGLSQGPGTASREQ.

This is an uncharacterized protein from Mus musculus (Mouse).